Here is a 344-residue protein sequence, read N- to C-terminus: DNA-directed RNA polymerase subunit alpha (344 aa).

The alpha N-terminal domain (alpha-NTD) stretch occupies residues Met-1–Pro-238. The tract at residues Asp-253–Asp-344 is alpha C-terminal domain (alpha-CTD).

Belongs to the RNA polymerase alpha chain family. As to quaternary structure, homodimer. The RNAP catalytic core consists of 2 alpha, 1 beta, 1 beta' and 1 omega subunit. When a sigma factor is associated with the core the holoenzyme is formed, which can initiate transcription.

It catalyses the reaction RNA(n) + a ribonucleoside 5'-triphosphate = RNA(n+1) + diphosphate. Its function is as follows. DNA-dependent RNA polymerase catalyzes the transcription of DNA into RNA using the four ribonucleoside triphosphates as substrates. This Helicobacter pylori (strain HPAG1) protein is DNA-directed RNA polymerase subunit alpha.